Reading from the N-terminus, the 97-residue chain is Small ribosomal subunit protein bS6 (97 aa).

It belongs to the bacterial ribosomal protein bS6 family.

Functionally, binds together with bS18 to 16S ribosomal RNA. The chain is Small ribosomal subunit protein bS6 (rpsF) from Lactococcus lactis subsp. lactis (strain IL1403) (Streptococcus lactis).